An 887-amino-acid polypeptide reads, in one-letter code: Multiple RNA-binding domain-containing protein 1 (887 aa).

The 93-residue stretch at Ser-2–Ser-94 folds into the RRM 1 domain. Disordered stretches follow at residues Lys-121–Asp-143, Lys-203–Ala-276, and Ser-297–Leu-336. Ser-220 and Ser-264 each carry phosphoserine. A compositionally biased stretch (basic and acidic residues) spans Ser-264 to Ala-276. Residues Ser-306–Ser-315 show a composition bias toward polar residues. The span at Leu-316 to Glu-325 shows a compositional bias: basic and acidic residues. RRM domains are found at residues Gly-345 to Glu-423, Lys-532 to Lys-604, Val-663 to Arg-746, and Gly-763 to Glu-840. The interval Glu-864–Phe-887 is disordered.

This sequence belongs to the RRM MRD1 family. Interacts with NOP1. Binds to the 35S pre-rRNA and the U3 snoRNA.

It is found in the nucleus. Its function is as follows. Involved in pre-rRNA processing. Required for maintaining steady-state levels of 40S ribosomal subunit. Required for the initial processing of pre-rRNA at the A0 to A2 sites, leading to the processing of the 23S pre-rRNA intermediate to the 18S rRNA. The polypeptide is Multiple RNA-binding domain-containing protein 1 (MRD1) (Saccharomyces cerevisiae (strain ATCC 204508 / S288c) (Baker's yeast)).